Here is a 510-residue protein sequence, read N- to C-terminus: Serine/threonine protein phosphatase 2A 57 kDa regulatory subunit B' kappa isoform (510 aa).

Residues 1 to 51 are disordered; that stretch reads MWKGFLSKLPRKTSASGRGADLDSGQCSNGAGNGNPIQRTSSCGSIPSGRS. Residues 25–51 show a composition bias toward polar residues; it reads GQCSNGAGNGNPIQRTSSCGSIPSGRS. Phosphothreonine occurs at positions 476 and 493. Residue serine 502 is modified to Phosphoserine. Threonine 508 is subject to Phosphothreonine.

This sequence belongs to the phosphatase 2A regulatory subunit B56 family. As to quaternary structure, PP2A consists of a common heteromeric enzyme, composed of a catalytic subunit (subunits C), a constant regulatory subunit (subunit A), and a variety of regulatory subunits such as subunits B (the R2/B/PR55/B55, R3/B''/PR72/PR130/PR59 and R5/B'/B56 families). Interacts with SIT1. In terms of processing, phosphorylated at Thr-476, Thr-493, Ser-502 and Thr-508 by SIT1. In terms of tissue distribution, expressed in root stele and epidermal cells.

The protein resides in the cytoplasm. It is found in the cytosol. It localises to the cell membrane. B regulatory subunit of phosphatase 2A (PP2A) involved in salt stress response. Under salt stress conditions, required for the catalytic activity of PP2A and the dephosphorylation of SIT1, a negative regulator of salt tolerance. Dephosphorylation of SIT1 turns off salt-induced SIT1 activity directly, which has a positive effect on salt tolerance. This Oryza sativa subsp. japonica (Rice) protein is Serine/threonine protein phosphatase 2A 57 kDa regulatory subunit B' kappa isoform.